The chain runs to 418 residues: MADTSLMPIPGQVDPVPAPRDITPRADGRVDLMGLPKARIQELFAEAGLDAKQAKLRSKQVYHWLYHRGVTDFEAMTDIAKTMRPWLAERFIVGRPNVVEAQHSTDGTRKWLLQTDDGHDFEMVFIPDADRGTLCVSSQVGCTLNCRFCHTGTMRLVRNLTPGEIVGQVMLARDALGEWPKGRMDGLDDVEDTGHYSADGRLLTNIVMMGMGEPLYNFDNVRDALKLVMDGEGLALSKRRITLSTSGVVPMMERCGEEIGVNLAVSLHAVTKDIRDEIVPINKKYGIEELLQACADYPGASNARRITFEYVMLKDKNDTDEHARELVRLLKQYNLPAKVNLIPFNPWPGAAYECSTPERIRAFSNIVFEGGISAPVRTPRGRDIDAACGQLKTAAQKKSRAERDREAAAEAEAAASQA.

Residues 1–21 (MADTSLMPIPGQVDPVPAPRD) are disordered. The Proton acceptor role is filled by Glu-122. The Radical SAM core domain occupies 128 to 383 (DADRGTLCVS…APVRTPRGRD (256 aa)). Cysteines 135 and 388 form a disulfide. Cys-142, Cys-146, and Cys-149 together coordinate [4Fe-4S] cluster. S-adenosyl-L-methionine is bound by residues 212-213 (GE), Ser-244, 266-268 (SLH), and Asn-345. Cys-388 acts as the S-methylcysteine intermediate in catalysis. Residues 393–418 (TAAQKKSRAERDREAAAEAEAAASQA) are disordered. Basic and acidic residues predominate over residues 399-408 (SRAERDREAA).

It belongs to the radical SAM superfamily. RlmN family. Requires [4Fe-4S] cluster as cofactor.

Its subcellular location is the cytoplasm. It catalyses the reaction adenosine(2503) in 23S rRNA + 2 reduced [2Fe-2S]-[ferredoxin] + 2 S-adenosyl-L-methionine = 2-methyladenosine(2503) in 23S rRNA + 5'-deoxyadenosine + L-methionine + 2 oxidized [2Fe-2S]-[ferredoxin] + S-adenosyl-L-homocysteine. The catalysed reaction is adenosine(37) in tRNA + 2 reduced [2Fe-2S]-[ferredoxin] + 2 S-adenosyl-L-methionine = 2-methyladenosine(37) in tRNA + 5'-deoxyadenosine + L-methionine + 2 oxidized [2Fe-2S]-[ferredoxin] + S-adenosyl-L-homocysteine. Its function is as follows. Specifically methylates position 2 of adenine 2503 in 23S rRNA and position 2 of adenine 37 in tRNAs. m2A2503 modification seems to play a crucial role in the proofreading step occurring at the peptidyl transferase center and thus would serve to optimize ribosomal fidelity. This is Dual-specificity RNA methyltransferase RlmN from Erythrobacter litoralis (strain HTCC2594).